Here is an 814-residue protein sequence, read N- to C-terminus: Protein kintoun (814 aa).

Residues 234–246 show a composition bias toward low complexity; it reads AANTARSPASPAP. Disordered regions lie at residues 234-259 and 357-490; these read AANT…EPRC and ARQE…MGDP. The span at 388–404 shows a compositional bias: basic and acidic residues; it reads AAREESADGTGADHGEK. Phosphoserine is present on residues S444 and S618. The tract at residues 654–686 is disordered; it reads AGLQGKGKGVREGCPLSEAEAADQSATSPAASD. The segment covering 675–686 has biased composition (low complexity); that stretch reads ADQSATSPAASD.

The protein belongs to the PIH1 family. Kintoun subfamily. Interacts with DNAI2 and HSPA1A. Interacts with CFAP300. Interacts with DNAAF4. Interacts with DNAAF6/PIH1D3. Expressed in nearly all organs of adult, with higher expression in tissues known to have motile cilia and flagella, such as brain and testis.

It is found in the cytoplasm. It localises to the dynein axonemal particle. Functionally, required for cytoplasmic pre-assembly of axonemal dyneins, thereby playing a central role in motility in cilia and flagella. Involved in pre-assembly of dynein arm complexes in the cytoplasm before intraflagellar transport loads them for the ciliary compartment. This is Protein kintoun from Mus musculus (Mouse).